The chain runs to 124 residues: Small ribosomal subunit protein uS12 (124 aa).

The segment at 1 to 28 (MPTISQLVGSERKRLTKKTKSPALKSCP) is disordered. A 3-methylthioaspartic acid modification is found at aspartate 89. The disordered stretch occupies residues 104–124 (TAGVKDRRQSRSKYGAKAPKD).

It belongs to the universal ribosomal protein uS12 family. As to quaternary structure, part of the 30S ribosomal subunit. Contacts proteins S8 and S17. May interact with IF1 in the 30S initiation complex.

Its function is as follows. With S4 and S5 plays an important role in translational accuracy. Interacts with and stabilizes bases of the 16S rRNA that are involved in tRNA selection in the A site and with the mRNA backbone. Located at the interface of the 30S and 50S subunits, it traverses the body of the 30S subunit contacting proteins on the other side and probably holding the rRNA structure together. The combined cluster of proteins S8, S12 and S17 appears to hold together the shoulder and platform of the 30S subunit. The chain is Small ribosomal subunit protein uS12 from Prochlorococcus marinus (strain MIT 9301).